The following is a 358-amino-acid chain: Core-capsid bridging protein (358 aa).

The segment at 296 to 331 (PSITPTPGYRGTTFKPSRTRSTRRRRSVRRRSRRTA) is disordered. The span at 312-329 (SRTRSTRRRRSVRRRSRR) shows a compositional bias: basic residues.

Belongs to the adenoviridae core-capsid bridging protein family. Monomer. Homodimer. Exists in equilibrium between monomers and dimers in solution. Interacts with the histone-like nucleoprotein; this interactions bridge the virus core to the capsid. Interacts with core protein X; this interactions bridge the virus core to the capsid. Interacts with the endosome lysis protein VI; this interactions bridge the virus core to the capsid. Interacts with the peripentonal hexons. Interacts with host NPM1; this interaction might play a role in virus assembly.

Its subcellular location is the virion. It localises to the host nucleus. The protein localises to the host nucleolus. Functionally, associates loosely with the viral DNA to form an outer shell around the nucleoprotein-DNA complex and links it with the capsid by binding the endosome lysis protein. Dissociates from the viral genome during entry. Might be involved in nuclear capsid assembly of the viral particles through its association with NPM1/nucleophosmin. In Human adenovirus F serotype 40 (HAdV-40), this protein is Core-capsid bridging protein.